Here is a 496-residue protein sequence, read N- to C-terminus: Glutamyl-tRNA(Gln) amidotransferase subunit B, organellar chromatophore (496 aa).

This sequence belongs to the GatB/GatE family. GatB subfamily. As to quaternary structure, subunit of the heterotrimeric GatCAB amidotransferase (AdT) complex, composed of A, B and C subunits.

Its subcellular location is the plastid. It is found in the organellar chromatophore. It catalyses the reaction L-glutamyl-tRNA(Gln) + L-glutamine + ATP + H2O = L-glutaminyl-tRNA(Gln) + L-glutamate + ADP + phosphate + H(+). Allows the formation of correctly charged Gln-tRNA(Gln) through the transamidation of misacylated Glu-tRNA(Gln). The reaction takes place in the presence of glutamine and ATP through an activated gamma-phospho-Glu-tRNA(Gln). The sequence is that of Glutamyl-tRNA(Gln) amidotransferase subunit B, organellar chromatophore from Paulinella chromatophora.